We begin with the raw amino-acid sequence, 124 residues long: UPF0102 protein Msil_0293 (124 aa).

This sequence belongs to the UPF0102 family.

The protein is UPF0102 protein Msil_0293 of Methylocella silvestris (strain DSM 15510 / CIP 108128 / LMG 27833 / NCIMB 13906 / BL2).